We begin with the raw amino-acid sequence, 2845 residues long: Adenomatous polyposis coli protein (2845 aa).

Alanine 2 bears the N-acetylalanine mark. Residues 2 to 61 adopt a coiled-coil conformation; the sequence is AAASYDQLLKQVEALKMENSNLRQELEDNSNHLTKLETEASNMKEVLKQLQGSIEDETMT. A phosphoserine mark is found at serine 105 and serine 109. A coiled-coil region spans residues 125-245; that stretch reads SRESTGYLEE…QAAEAERSSQ (121 aa). Residues 238–304 are disordered; that stretch reads AEAERSSQSR…THSAPRRLTS (67 aa). Positions 239–263 are enriched in basic and acidic residues; that stretch reads EAERSSQSRHDAASHEAGRQHEGHG. Polar residues predominate over residues 266–279; it reads ESNTAASSSGQSPA. ARM repeat units follow at residues 451 to 493, 503 to 545, 546 to 589, 590 to 636, 637 to 681, 682 to 723, and 724 to 765; these read LMKL…HYSV, LTNL…IASV, LRNL…VLSA, LWNL…GGGI, LRNV…ACGT, LWNL…SAAA, and LRNL…LDAQ. A phosphoserine mark is found at serine 742, serine 746, and serine 778. The tract at residues 828 to 873 is disordered; that stretch reads VLPSSSSSRGSLDSSRSEKDRSLERERGIGLSAYHPTTENAGTSSK. Residues 831–841 are compositionally biased toward low complexity; that stretch reads SSSSSRGSLDS. The span at 842–855 shows a compositional bias: basic and acidic residues; it reads SRSEKDRSLERERG. A compositionally biased stretch (polar residues) spans 862-873; sequence HPTTENAGTSSK. Serine 906 is subject to Phosphoserine. Disordered stretches follow at residues 921-942 and 956-986; these read RRSSASHTHSNTYNFTKSENSN and RSSNDSLNSVTSSDGYGKRGQMKPSVESYSE. The span at 927–942 shows a compositional bias: polar residues; it reads HTHSNTYNFTKSENSN. The span at 959–969 shows a compositional bias: low complexity; that stretch reads NDSLNSVTSSD. Serine 985, serine 1036, and serine 1040 each carry phosphoserine. The segment at 1018 to 1168 is interaction with catenins; sequence ELDTPINYSL…TNYSIKYNEE (151 aa). Disordered regions lie at residues 1058–1079, 1092–1168, 1189–1247, and 1307–1375; these read IKQNEQRQARSQNTSYPVYSEN, GQQE…YNEE, SQKP…GTTC, and ENDV…PEHY. 2 stretches are compositionally biased toward polar residues: residues 1066 to 1078 and 1103 to 1128; these read ARSQNTSYPVYSE and RGTSGSETNRMGSSHAINQNVNQSLC. A compositionally biased stretch (low complexity) spans 1189–1204; it reads SQKPSFSFSKNSSAQS. The segment covering 1211 to 1245 has biased composition (polar residues); the sequence is SPSSENTAVPPSNAKRQNQLRPSSAQRNGQTQKGT. Positions 1354-1365 are enriched in low complexity; that stretch reads SSGAKSPSKSGA. Phosphoserine occurs at positions 1359, 1370, 1384, 1391, and 1394. Disordered stretches follow at residues 1400–1474, 1525–1568, 1587–1606, 1746–2010, and 2042–2069; these read IASS…VNAA, PPVQ…SDDD, RKAKKLAQTASKLPPPVARK, DQVQ…APKS, and ISSAMPKKKRPSRLKSESEKQSPRKVGG. Threonine 1437 is subject to Phosphothreonine. Over residues 1447-1465 the composition is skewed to basic and acidic residues; the sequence is AKREVPKSKVPAAEKRESG. Positions 1532 to 1546 are enriched in acidic residues; it reads NGNETESEQPEESNE. Basic and acidic residues predominate over residues 1547-1562; the sequence is NQDKEVEKPDSEKDLL. Phosphoserine is present on serine 1565. The span at 1747–1762 shows a compositional bias: polar residues; that stretch reads QVQQASSTSSGANKNQ. Serine 1772 is subject to Phosphoserine. Residues 1783 to 1792 are compositionally biased toward basic and acidic residues; the sequence is YRTRVRKNTD. Phosphoserine occurs at positions 1859, 1861, and 1862. The tract at residues 1864–1891 is highly charged; that stretch reads DFDDDDVDLSREKAELRKGKESKDSEAK. Residues 1871–1894 show a composition bias toward basic and acidic residues; the sequence is DLSREKAELRKGKESKDSEAKVTC. The segment covering 1900–1911 has biased composition (low complexity); that stretch reads SSQQAASKSQAS. Residues 1927–1936 show a composition bias toward polar residues; that stretch reads KQPTFPQSSK. Residues 1937–1949 show a composition bias toward basic and acidic residues; that stretch reads DGPDRGAATDEKL. Phosphoserine occurs at positions 1969 and 1971. The segment covering 1979-1990 has biased composition (basic and acidic residues); the sequence is NNKESEPIKEAE. Positions 2034–2058 are interaction with AXIN1; sequence EDDLLQECISSAMPKKKRPSRLKSE. Phosphoserine is present on residues serine 2087, serine 2092, serine 2125, serine 2129, serine 2130, and serine 2132. Disordered stretches follow at residues 2146–2190, 2202–2652, and 2664–2845; these read SPFH…GIKG, KIRS…PPVS, and CPIN…VTSV. A Phosphothreonine modification is found at threonine 2151. The segment at 2167–2674 is basic region; sequence ILKPGEKSTL…PINNPRSGRS (508 aa). The segment covering 2169 to 2187 has biased composition (basic and acidic residues); sequence KPGEKSTLEAKKIESENKG. Polar residues-rich tracts occupy residues 2203–2223 and 2257–2272; these read IRSNSEISSQMKQPLPTNMPS and ASKSPSEGPGATTSPR. Serine 2260, serine 2270, and serine 2283 each carry phosphoserine. Low complexity predominate over residues 2290 to 2311; the sequence is SQISGSNKGSSRSGSRDSTPSR. A compositionally biased stretch (polar residues) spans 2312–2331; it reads PTQQPLSRPMQSPGRNSISP. Positions 2348–2369 are enriched in low complexity; the sequence is TSSPSTASTKSSGSGKMSYTSP. Polar residues predominate over residues 2370–2411; that stretch reads GRQLSQQNLTKQASLSKNASSIPRSESASKGLNQMSNGNGSN. 2 stretches are compositionally biased toward low complexity: residues 2417–2429 and 2459–2477; these read SRMSSTKSSGSES and SASFESLSPSSRPDSPTRS. Serine 2473 and serine 2535 each carry phosphoserine. Positions 2475 to 2845 are interaction with DLG1; that stretch reads TRSQAQTPVL…HSGSYLVTSV (371 aa). Over residues 2518–2535 the composition is skewed to basic and acidic residues; it reads NDGRPTKRHDIARSHSES. A compositionally biased stretch (polar residues) spans 2555–2568; that stretch reads SSSLPRVSTWRRTG. A Phosphoserine modification is found at serine 2569. Positions 2569 to 2579 are enriched in low complexity; that stretch reads SSSSILSASSE. Over residues 2580–2592 the composition is skewed to basic and acidic residues; that stretch reads SSEKAKSEDERHV. Over residues 2626 to 2638 the composition is skewed to low complexity; it reads ASQSASSGAASGA. Over residues 2668–2679 the composition is skewed to polar residues; that stretch reads NPRSGRSPTGNT. Phosphoserine is present on residues serine 2671 and serine 2674. The segment at 2674–2845 is interaction with MAPRE1; sequence SPTGNTPPVI…HSGSYLVTSV (172 aa). Threonine 2679 is modified (phosphothreonine). Low complexity predominate over residues 2684 to 2694; it reads DSVSEKGSSSI. The segment covering 2695–2705 has biased composition (basic and acidic residues); that stretch reads KDSKDSKDTHG. Over residues 2706–2716 the composition is skewed to polar residues; it reads KQSVGSGSPVQ. Phosphoserine is present on residues serine 2713 and serine 2726. Over residues 2765–2776 the composition is skewed to low complexity; the sequence is SSSSSSKHSSPS. A compositionally biased stretch (polar residues) spans 2786–2814; the sequence is FNYNPSPRKSSADSTSARPSQIPTPVSTN. A Phosphoserine modification is found at serine 2791. The short motif at 2805–2808 is the Microtubule tip localization signal element; sequence SQIP. Positions 2843–2845 match the PDZ-binding motif; that stretch reads TSV.

Belongs to the adenomatous polyposis coli (APC) family. In terms of assembly, forms homooligomers. Found in a complex consisting of ARHGEF4, APC and CTNNB1. Found in a complex composed of MACF1, APC, AXIN1, CTNNB1 and GSK3B. The complex composed, at least, of APC, CTNNB1 and GSK3B interacts with JPT1; the interaction requires the inactive form of GSK3B (phosphorylated at 'Ser-9'). Interacts with APC2. Interacts with DLG1 (via PDZ domains) and DLG3 (via PDZ domains). Interacts with alpha- and beta-catenins. Interacts with AXIN1 (via RGS domain). Interacts with ARHGEF4 (via N-terminus). Interacts (via C-terminal residues 2674-2843) with MAPRE1 (via C-terminal residues 206-211); the interaction inhibits association with and bundling of F-actin. Interacts with MAPRE2 and MAPRE3 (via C-terminus). Interacts with DIAPH1; DIAPH1 acts as a scaffold protein for MAPRE1 and APC to stabilize microtubules and promote cell migration. Interacts with DIAPH2. Interacts with SCRIB; may mediate targeting to adherens junctions of epithelial cells. Interacts with SPATA13 (via N-terminus and SH3 domain). Interacts with ASAP1 (via SH3 domain). Interacts (at the cell membrane) with AMER1 and AMER2 (via ARM repeats). Interacts with KHDRBS1. Interacts with actin; binds both to F-actin and actin filament bundles. Phosphorylated; phosphorylation enhances the F-actin bundling activity. Phosphorylated by GSK3B. In terms of processing, ubiquitinated, leading to its degradation by the proteasome. Ubiquitination is facilitated by Axin. Deubiquitinated by ZRANB1/TRABID. In terms of tissue distribution, expressed in liver, spleen, kidney, heart, lung, brain, stomach, intestine, testis and ovary.

It is found in the cell junction. The protein localises to the adherens junction. It localises to the cytoplasm. Its subcellular location is the cytoskeleton. The protein resides in the cell projection. It is found in the lamellipodium. The protein localises to the ruffle membrane. It localises to the cell membrane. In terms of biological role, tumor suppressor. Promotes rapid degradation of CTNNB1 and participates in Wnt signaling as a negative regulator. APC activity is correlated with its phosphorylation state. Activates the GEF activity of SPATA13 and ARHGEF4. Plays a role in hepatocyte growth factor (HGF)-induced cell migration. Required for MMP9 up-regulation via the JNK signaling pathway in colorectal tumor cells. Associates with both microtubules and actin filaments, components of the cytoskeleton. Plays a role in mediating the organization of F-actin into ordered bundles. Functions downstream of Rho GTPases and DIAPH1 to selectively stabilize microtubules. Acts as a mediator of ERBB2-dependent stabilization of microtubules at the cell cortex. It is required for the localization of MACF1 to the cell membrane and this localization of MACF1 is critical for its function in microtubule stabilization. The sequence is that of Adenomatous polyposis coli protein (Apc) from Mus musculus (Mouse).